The chain runs to 1148 residues: Alpha-mannosidase 2 (1148 aa).

The Cytoplasmic portion of the chain corresponds to 1 to 5; it reads MKLSR. A helical; Signal-anchor for type II membrane protein membrane pass occupies residues 6-26; it reads QFTVFGSAIFCVVIFSLYLML. Residues 27–1148 are Lumenal-facing; sequence DRGHLDYPRG…EISTSRIRLR (1122 aa). Phosphoserine occurs at positions 80 and 82. N-linked (GlcNAc...) asparagine glycosylation occurs at asparagine 93. Positions 174, 176, 288, and 568 each coordinate Zn(2+). The active-site Nucleophile is aspartate 288. The tract at residues 1121–1148 is disordered; that stretch reads MHSPPDAQNTSEVSLSPMEISTSRIRLR.

The protein belongs to the glycosyl hydrolase 38 family. In terms of assembly, homodimer; disulfide-linked. Zn(2+) is required as a cofactor. Post-translationally, glycosylated. As to expression, liver.

The protein localises to the golgi apparatus membrane. It carries out the reaction N(4)-{beta-D-GlcNAc-(1-&gt;2)-alpha-D-Man-(1-&gt;3)-[alpha-D-Man-(1-&gt;3)-[alpha-D-Man-(1-&gt;6)]-alpha-D-Man-(1-&gt;6)]-beta-D-Man-(1-&gt;4)-beta-D-GlcNAc-(1-&gt;4)-beta-D-GlcNAc}-L-asparaginyl-[protein] + 2 H2O = 2 alpha-D-mannopyranose + an N(4)-{beta-D-GlcNAc-(1-&gt;2)-alpha-D-Man-(1-&gt;3)-[alpha-D-Man-(1-&gt;6)]-beta-D-Man-(1-&gt;4)-beta-D-GlcNAc-(1-&gt;4)-beta-D-GlcNAc}-L-asparaginyl-[protein]. The protein operates within protein modification; protein glycosylation. Its activity is regulated as follows. Inhibited by swainsonine. Catalyzes the first committed step in the biosynthesis of complex N-glycans. It controls conversion of high mannose to complex N-glycans; the final hydrolytic step in the N-glycan maturation pathway. The sequence is that of Alpha-mannosidase 2 (Man2a1) from Rattus norvegicus (Rat).